Here is a 299-residue protein sequence, read N- to C-terminus: Transcription termination/antitermination protein NusG (299 aa).

The disordered stretch occupies residues 30–96 (DPDEAELADA…APVEPAEPVD (67 aa)). 2 repeat units span residues 46–49 (EEAA) and 70–73 (EEAA). Positions 46–87 (EEAALHVESDEDEDEADVEVDAAVEEAADDAEVAEEEAEEAA) are 4 X 4 AA repeats of E-E-A-A. Acidic residues predominate over residues 54 to 87 (SDEDEDEADVEVDAAVEEAADDAEVAEEEAEEAA). A 3; approximate repeat occupies 80–83 (EEEA). Repeat unit 4 spans residues 84–87 (EEAA). The KOW domain maps to 248–276 (VGDSVTVTDGPFATLQATINEINPDSKKV).

It belongs to the NusG family. Post-translationally, the N-terminus is blocked.

Its function is as follows. Participates in transcription elongation, termination and antitermination. This chain is Transcription termination/antitermination protein NusG, found in Streptomyces virginiae (Streptomyces cinnamonensis).